The primary structure comprises 306 residues: Agmatinase (306 aa).

Mn(2+) is bound by residues His-126, Asp-149, His-151, Asp-153, Asp-230, and Asp-232.

This sequence belongs to the arginase family. Agmatinase subfamily. Mn(2+) is required as a cofactor.

It catalyses the reaction agmatine + H2O = urea + putrescine. Its pathway is amine and polyamine biosynthesis; putrescine biosynthesis via agmatine pathway; putrescine from agmatine: step 1/1. In terms of biological role, catalyzes the formation of putrescine from agmatine. The protein is Agmatinase of Salmonella dublin (strain CT_02021853).